A 297-amino-acid chain; its full sequence is 4-hydroxy-tetrahydrodipicolinate synthase (297 aa).

Position 47 (Thr-47) interacts with pyruvate. Tyr-136 functions as the Proton donor/acceptor in the catalytic mechanism. Residue Lys-165 is the Schiff-base intermediate with substrate of the active site. Thr-206 is a pyruvate binding site.

This sequence belongs to the DapA family. In terms of assembly, homotetramer; dimer of dimers.

It is found in the cytoplasm. It catalyses the reaction L-aspartate 4-semialdehyde + pyruvate = (2S,4S)-4-hydroxy-2,3,4,5-tetrahydrodipicolinate + H2O + H(+). It functions in the pathway amino-acid biosynthesis; L-lysine biosynthesis via DAP pathway; (S)-tetrahydrodipicolinate from L-aspartate: step 3/4. Functionally, catalyzes the condensation of (S)-aspartate-beta-semialdehyde [(S)-ASA] and pyruvate to 4-hydroxy-tetrahydrodipicolinate (HTPA). The sequence is that of 4-hydroxy-tetrahydrodipicolinate synthase from Sulfurovum sp. (strain NBC37-1).